Reading from the N-terminus, the 336-residue chain is MGPITANSSKCATEDQMILQTSLLLRINVIIMTIVAIITFILTYKALFILKIRPIFHSSTKILLYTSLLFVNVHAVIFMVIQNTALIRSFTLSDKPCEIMRTTLECRFQNHVLIFGIAGVNFNQFGLTVDRLLATIIPQSYSHMGALPGVILSVLVVACSIAAPLIIAIGDPYDDIVPNCFFFPEHSAPRANIFLVTLSTLVITSIFLNFIIIYANKKLEKGCRTRFYVTQRYQKREALISTRIISYIAASQFLGLTLYSTMVLTLRLHKSMIPISIYHNMVWWAYTVPFAAVSLPALLIYRINQVGSNRKRVINRITAKVETQEEHMKSLKELWA.

Residues 1 to 28 (MGPITANSSKCATEDQMILQTSLLLRIN) are Extracellular-facing. The chain crosses the membrane as a helical span at residues 29–49 (VIIMTIVAIITFILTYKALFI). At 50–61 (LKIRPIFHSSTK) the chain is on the cytoplasmic side. A helical membrane pass occupies residues 62-82 (ILLYTSLLFVNVHAVIFMVIQ). At 83 to 107 (NTALIRSFTLSDKPCEIMRTTLECR) the chain is on the extracellular side. Residues 108–128 (FQNHVLIFGIAGVNFNQFGLT) traverse the membrane as a helical segment. The Cytoplasmic portion of the chain corresponds to 129 to 148 (VDRLLATIIPQSYSHMGALP). The helical transmembrane segment at 149–169 (GVILSVLVVACSIAAPLIIAI) threads the bilayer. The Extracellular segment spans residues 170–192 (GDPYDDIVPNCFFFPEHSAPRAN). A helical transmembrane segment spans residues 193–213 (IFLVTLSTLVITSIFLNFIII). At 214-243 (YANKKLEKGCRTRFYVTQRYQKREALISTR) the chain is on the cytoplasmic side. A helical transmembrane segment spans residues 244-264 (IISYIAASQFLGLTLYSTMVL). The Extracellular portion of the chain corresponds to 265 to 280 (TLRLHKSMIPISIYHN). The helical transmembrane segment at 281–301 (MVWWAYTVPFAAVSLPALLIY) threads the bilayer. Over 302-336 (RINQVGSNRKRVINRITAKVETQEEHMKSLKELWA) the chain is Cytoplasmic.

The protein belongs to the nematode receptor-like protein sra family. Expressed in the URX sensory neuron, the ALA interneuron and in additional interneurons, pharyngeal neurons and muscle.

It is found in the membrane. This Caenorhabditis elegans protein is Serpentine receptor class alpha-10 (sra-10).